We begin with the raw amino-acid sequence, 458 residues long: UPF0210 protein MJ1665 (458 aa).

Belongs to the UPF0210 family.

This chain is UPF0210 protein MJ1665, found in Methanocaldococcus jannaschii (strain ATCC 43067 / DSM 2661 / JAL-1 / JCM 10045 / NBRC 100440) (Methanococcus jannaschii).